A 415-amino-acid polypeptide reads, in one-letter code: Probable disease resistance protein At5g66890 (415 aa).

An NB-ARC domain is found at 8-43 (SFDALPHNLRECFLDMASFLEDQRIIASTIIDLWSA). 6 LRR repeats span residues 229–251 (SLEK…EDVS), 256–278 (SLQE…ISQV), 280–303 (SLKK…GDLR), 304–326 (DLET…IDRL), 328–351 (NLRF…GKLK), and 352–373 (KLEK…VKNL). A coiled-coil region spans residues 239-260 (HVVDALNELEDVSETLQSLQEI).

This sequence belongs to the disease resistance NB-LRR family.

Possible disease resistance protein. This chain is Probable disease resistance protein At5g66890, found in Arabidopsis thaliana (Mouse-ear cress).